Consider the following 635-residue polypeptide: Protein NSP-INTERACTING KINASE 2 (635 aa).

Residues 1-32 (MLQGRREAKKSYALFSSTFFFFFICFLSSSSA) form the signal peptide. Residues 33-248 (ELTDKGVNFE…DGGTKNRKIA (216 aa)) lie on the Extracellular side of the membrane. Residues asparagine 92 and asparagine 103 are each glycosylated (N-linked (GlcNAc...) asparagine). 4 LRR repeats span residues 104–128 (LTNL…IGKL), 129–153 (MKLK…SYSK), 155–176 (LQYL…LANM), and 177–200 (TQLT…LAKT). N-linked (GlcNAc...) asparagine glycosylation is found at asparagine 140, asparagine 162, asparagine 175, asparagine 188, asparagine 219, asparagine 231, and asparagine 235. Positions 214-242 (TEKDCNGTQPKPMSITLNSSQNKSSDGGT) are disordered. The segment covering 219–241 (NGTQPKPMSITLNSSQNKSSDGG) has biased composition (polar residues). Residues 249 to 269 (VVFGVSLTCVCLLIIGFGFLL) form a helical membrane-spanning segment. Residues 270–635 (WWRRRHNKQV…VQAMELSGPR (366 aa)) lie on the Cytoplasmic side of the membrane. Position 309 is a phosphothreonine (threonine 309). A Protein kinase domain is found at 312–591 (FSSKNLVGKG…EGDGLVEKWE (280 aa)). Residues 318-326 (VGKGGFGNV) and lysine 340 contribute to the ATP site. Phosphoserine is present on residues serine 393 and serine 396. At threonine 408 the chain carries Phosphothreonine. The interaction with geminivirus NSP protein stretch occupies residues 422-502 (YLHEQCDPKI…DVFGFGILLL (81 aa)). Aspartate 435 serves as the catalytic Proton acceptor. 3 positions are modified to phosphothreonine: threonine 468, threonine 469, and threonine 474. A Phosphotyrosine modification is found at tyrosine 482. Position 484 is a phosphoserine (serine 484). Threonine 485 carries the post-translational modification Phosphothreonine. Serine 489 bears the Phosphoserine mark. Position 564 is a phosphothreonine (threonine 564). Over residues 593–613 (SSQRAETNRSYSKPNEFSSSE) the composition is skewed to polar residues. Positions 593-621 (SSQRAETNRSYSKPNEFSSSERYSDLTDD) are disordered.

The protein belongs to the protein kinase superfamily. Ser/Thr protein kinase family. In terms of assembly, oligomer. Interacts with geminivirus nuclear shuttle protein (NSP). In terms of processing, autophosphorylated. Expressed in flowers and roots.

The protein localises to the cell membrane. The enzyme catalyses L-seryl-[protein] + ATP = O-phospho-L-seryl-[protein] + ADP + H(+). The catalysed reaction is L-threonyl-[protein] + ATP = O-phospho-L-threonyl-[protein] + ADP + H(+). With respect to regulation, inhibited by the viral nuclear shuttle protein (NSP) that binds to the region required for oligomerization. Functionally, involved in defense response to geminivirus infection. Phosphorylates RPL10A in vitro. In Arabidopsis thaliana (Mouse-ear cress), this protein is Protein NSP-INTERACTING KINASE 2 (NIK2).